Reading from the N-terminus, the 425-residue chain is MMKLEMVCTGEEVLSGQIVDTNAAWFASTMMEHGIEIQRRVTVGDRLEDLIAVFQERSLHADVILVNGGLGPTSDDMSAEAMAKAKGESLVENREWRQHLEDWFTRNNREMPVSNLKQAMLPESAVMVDNPVGTACGFRVKLNRAWLFFTPGVPFELKHMVKEQFIPFIREEFGLDAKVALKKLLTIGHGESSLADKIEPLELPEGITIGYRSSMPHIEIKIFARGEKAIALLPRVTGHIKMVLGTAVVAEDKATLAEEIHAKLLNSGLTLSVAESCTGGMITSQLVDFPGSSSYLQHGLVTYSNESKVRVLGVNPATLDDHGAVSIPTVEEMAKGARAILDSDFALATSGIAGPDGGTEEKPVGTVAIALATRSGVYSQMIKLPRRSRDLVRSLSAAVAYDMLRRELLTEAVIVDYQSIGRFSK.

Belongs to the CinA family.

The sequence is that of CinA-like protein from Shewanella sp. (strain MR-4).